Consider the following 338-residue polypeptide: Lipoate-protein ligase A (338 aa).

The BPL/LPL catalytic domain maps to 29–216 (PATQRVLFLW…AFFAHYGEHV (188 aa)). ATP contacts are provided by residues R71, 76 to 79 (GAVF), and K134. Residue K134 participates in (R)-lipoate binding.

It belongs to the LplA family. Monomer.

The protein localises to the cytoplasm. It catalyses the reaction L-lysyl-[lipoyl-carrier protein] + (R)-lipoate + ATP = N(6)-[(R)-lipoyl]-L-lysyl-[lipoyl-carrier protein] + AMP + diphosphate + H(+). It participates in protein modification; protein lipoylation via exogenous pathway; protein N(6)-(lipoyl)lysine from lipoate: step 1/2. It functions in the pathway protein modification; protein lipoylation via exogenous pathway; protein N(6)-(lipoyl)lysine from lipoate: step 2/2. Functionally, catalyzes both the ATP-dependent activation of exogenously supplied lipoate to lipoyl-AMP and the transfer of the activated lipoyl onto the lipoyl domains of lipoate-dependent enzymes. This is Lipoate-protein ligase A from Escherichia coli O17:K52:H18 (strain UMN026 / ExPEC).